A 209-amino-acid chain; its full sequence is Kynurenine formamidase (209 aa).

Phe19 contacts substrate. Positions 49, 53, and 55 each coordinate Zn(2+). Residue His59 is the Proton donor/acceptor of the active site. Zn(2+) is bound by residues His160 and Glu172.

Belongs to the Cyclase 1 superfamily. KynB family. As to quaternary structure, homodimer. The cofactor is Zn(2+).

The enzyme catalyses N-formyl-L-kynurenine + H2O = L-kynurenine + formate + H(+). The protein operates within amino-acid degradation; L-tryptophan degradation via kynurenine pathway; L-kynurenine from L-tryptophan: step 2/2. Catalyzes the hydrolysis of N-formyl-L-kynurenine to L-kynurenine, the second step in the kynurenine pathway of tryptophan degradation. In Delftia acidovorans (strain DSM 14801 / SPH-1), this protein is Kynurenine formamidase.